Reading from the N-terminus, the 204-residue chain is Ras-related protein Rab-7L1 (204 aa).

S33, K34, H35, Y36, K37, and T39 together coordinate GTP. The Effector region signature appears at 36-44 (YKSTVGVDF). At T71 the chain carries Phosphothreonine; by LRRK2. A Phosphoserine modification is found at S72. GTP-binding residues include K126, V156, and K157. 2 S-geranylgeranyl cysteine lipidation sites follow: C203 and C204.

It belongs to the small GTPase superfamily. Rab family. As to quaternary structure, interacts with LRRK2 (via the N-terminus); this interaction is direct and stimulates kinase activity. Expressed predominantly in kidney and much less in brain, heart, muscle, fat, liver, spleen, adrenal gland, ovary, thymus and lung. Not expressed in testis and intestine.

The protein localises to the cell membrane. The protein resides in the cytoplasm. It is found in the perinuclear region. Its subcellular location is the golgi apparatus. It localises to the golgi apparatus membrane. The protein localises to the trans-Golgi network. The protein resides in the cytoskeleton. Functionally, the small GTPases Rab are key regulators in vesicle trafficking. Essential for maintaining the integrity of endosome-trans-Golgi network structure. Together with LRRK2, plays a role in the retrograde trafficking pathway for recycling proteins, such as mannose 6 phosphate receptor (M6PR), between lysosomes and the Golgi apparatus in a retromer-dependent manner. Recruits LRRK2 to the Golgi apparatus and stimulates LRRK2 kinase activity. Stimulates phosphorylation of RAB10 'Thr-73' by LRRK2. Regulates also neuronal process morphology in the intact central nervous system (CNS). The sequence is that of Ras-related protein Rab-7L1 (Rab29) from Rattus norvegicus (Rat).